The sequence spans 296 residues: MDLVNNLNDRLLFAVPKKGRLYEKAVELLKGSDIQFHRHNRLDIALSTNLPLALVFLPAADIPRFVGEGRVALGITGIDQVREAKMDVENALDLNFGSCKLQVQVPEKGPYTDPKQLIGKSIVTSFTSLAEEYFAELEGVPVKDITTNIKFVGGSVEAACALGVADGIIDLVESGETMRAAGLKPIATVLETSASLIVSKNPSHPELVQMIKSRIEGVLAANKYVLCNYNAPRDKLDALLKITPGRRAATVSPLDDEGWCAVSSMAEKKKIAQIMDELKKEGASDILVFSISNCRV.

The protein belongs to the ATP phosphoribosyltransferase family.

It localises to the cytoplasm. It catalyses the reaction 1-(5-phospho-beta-D-ribosyl)-ATP + diphosphate = 5-phospho-alpha-D-ribose 1-diphosphate + ATP. Its pathway is amino-acid biosynthesis; L-histidine biosynthesis; L-histidine from 5-phospho-alpha-D-ribose 1-diphosphate: step 1/9. Functionally, catalyzes the condensation of ATP and 5-phosphoribose 1-diphosphate to form N'-(5'-phosphoribosyl)-ATP (PR-ATP). Has a crucial role in the pathway because the rate of histidine biosynthesis seems to be controlled primarily by regulation of the enzymatic activity. The sequence is that of ATP phosphoribosyltransferase (HIS1) from Yarrowia lipolytica (strain CLIB 122 / E 150) (Yeast).